Reading from the N-terminus, the 187-residue chain is Adenine phosphoribosyltransferase (187 aa).

133 to 137 provides a ligand contact to AMP; it reads ATGGS.

It belongs to the purine/pyrimidine phosphoribosyltransferase family. As to quaternary structure, homodimer. It depends on Mg(2+) as a cofactor.

It is found in the cytoplasm. The protein resides in the nucleus. The enzyme catalyses AMP + diphosphate = 5-phospho-alpha-D-ribose 1-diphosphate + adenine. It participates in purine metabolism; AMP biosynthesis via salvage pathway; AMP from adenine: step 1/1. Catalyzes a salvage reaction resulting in the formation of AMP, that is energically less costly than de novo synthesis. This chain is Adenine phosphoribosyltransferase (APT1), found in Kluyveromyces lactis (strain ATCC 8585 / CBS 2359 / DSM 70799 / NBRC 1267 / NRRL Y-1140 / WM37) (Yeast).